A 108-amino-acid polypeptide reads, in one-letter code: MADKVIALACAAGMSTSLLVSKMQKAAAENGKDYEIFAKSTADIDNMLAGTGSPKPDVLLLGPQVAFMKGEVAKKAEIAGVPMDVIKMQDYGMMRGDKVLAAAENLMN.

Positions 3 to 108 (DKVIALACAA…VLAAAENLMN (106 aa)) constitute a PTS EIIB type-3 domain. The Phosphocysteine intermediate role is filled by C10. At C10 the chain carries Phosphocysteine; by EIIA.

The enzyme catalyses N(pros)-phospho-L-histidyl-[protein] + D-galactose(out) = D-galactose 6-phosphate(in) + L-histidyl-[protein]. Its function is as follows. The phosphoenolpyruvate-dependent sugar phosphotransferase system (sugar PTS), a major carbohydrate active transport system, catalyzes the phosphorylation of incoming sugar substrates concomitantly with their translocation across the cell membrane. Involved in galactose transport with PtcA and Lmg_0963. The sequence is that of PTS system galactose-specific EIIB component from Lactococcus lactis subsp. cremoris (strain MG1363).